A 540-amino-acid chain; its full sequence is Alanine aminotransferase 2 (540 aa).

Position 358 is an N6-(pyridoxal phosphate)lysine (Lys358).

This sequence belongs to the class-I pyridoxal-phosphate-dependent aminotransferase family. Alanine aminotransferase subfamily. Homodimer. The cofactor is pyridoxal 5'-phosphate.

The catalysed reaction is L-alanine + 2-oxoglutarate = pyruvate + L-glutamate. It functions in the pathway amino-acid degradation; L-alanine degradation via transaminase pathway; pyruvate from L-alanine: step 1/1. Functionally, catalyzes the reversible transamination between alanine and 2-oxoglutarate to form pyruvate and glutamate. The sequence is that of Alanine aminotransferase 2 (gpt2) from Xenopus laevis (African clawed frog).